We begin with the raw amino-acid sequence, 329 residues long: Cytosolic arginine sensor for mTORC1 subunit 2 (329 aa).

2 consecutive ACT domains span residues 72 to 140 (ADAT…HTLS) and 262 to 322 (ELWK…SALK).

It belongs to the GATS family. Forms homodimers and heterodimers with CASTOR1. Interacts with the GATOR2 complex which is composed of MIOS, SEC13, SEH1L, WDR24 and WDR59; the interaction is not regulated by arginine. In terms of tissue distribution, widely expressed.

Its subcellular location is the cytoplasm. The protein localises to the cytosol. In terms of biological role, functions as a negative regulator of the TORC1 signaling pathway through the GATOR complex. As part of homodimers or heterodimers with CASTOR1, directly binds and inhibits the GATOR subcomplex GATOR2 and thereby mTORC1. Does not directly bind arginine, but binding of arginine to CASTOR1 disrupts the interaction of CASTOR2-containing heterodimers with GATOR2 which can in turn activate mTORC1 and the TORC1 signaling pathway. This Homo sapiens (Human) protein is Cytosolic arginine sensor for mTORC1 subunit 2.